The chain runs to 1026 residues: Multidrug resistance protein MdtC (1026 aa).

A run of 10 helical transmembrane segments spans residues 12 to 34 (VATLLLTLAIALCGVLGFRLLPV), 336 to 353 (QSLIIAVALVILVVFLFL), 360 to 382 (AIPALAVPVSLIGTFAAMYLCGF), 431 to 450 (VGFTVLSMSLSLVAVFLPLL), 463 to 485 (FAVTLSVAIMISLLISLTLTPML), 525 to 547 (HARWVLLLLLGTIALNVWLYISI), 853 to 875 (LLLILAAIITVYIVLGILYESYV), 895 to 917 (LEWFGAPFSLVALIGIMLLIGIV), 948 to 970 (LLRFRPIMMTTLAALFGALPLVL), and 985 to 1007 (TIVGGLLMSQVLTLYTTPVVYLF).

This sequence belongs to the resistance-nodulation-cell division (RND) (TC 2.A.6) family. MdtC subfamily. In terms of assembly, part of a tripartite efflux system composed of MdtA, MdtB and MdtC. MdtC forms a heteromultimer with MdtB.

Its subcellular location is the cell inner membrane. The protein is Multidrug resistance protein MdtC of Pectobacterium atrosepticum (strain SCRI 1043 / ATCC BAA-672) (Erwinia carotovora subsp. atroseptica).